The sequence spans 240 residues: MQIFPAIDLKNGQCVRLFQGDFSKKMIVNEDPIAQAKAFATGGATYLHIVDLDGALEGRPVNLEIIQKMKEAATVPVQVGGGIRSLAQVDYYLDSGIDRVIIGSAALTNPDFLHAAVQKYGPKIAVGIDAKNGYVATSGWLEVSQVNYLDLAKQMEKVGVETIIYTDISRDGTLTGPNLEQMAALQKHVNIHLIASGGVSSRADLEALSQLGLYGAIAGKALYNGHISMSDVTEVENHAY.

The Proton acceptor role is filled by Asp-8. Asp-129 serves as the catalytic Proton donor.

It belongs to the HisA/HisF family.

It localises to the cytoplasm. The enzyme catalyses 1-(5-phospho-beta-D-ribosyl)-5-[(5-phospho-beta-D-ribosylamino)methylideneamino]imidazole-4-carboxamide = 5-[(5-phospho-1-deoxy-D-ribulos-1-ylimino)methylamino]-1-(5-phospho-beta-D-ribosyl)imidazole-4-carboxamide. It functions in the pathway amino-acid biosynthesis; L-histidine biosynthesis; L-histidine from 5-phospho-alpha-D-ribose 1-diphosphate: step 4/9. The sequence is that of 1-(5-phosphoribosyl)-5-[(5-phosphoribosylamino)methylideneamino] imidazole-4-carboxamide isomerase from Listeria welshimeri serovar 6b (strain ATCC 35897 / DSM 20650 / CCUG 15529 / CIP 8149 / NCTC 11857 / SLCC 5334 / V8).